A 389-amino-acid polypeptide reads, in one-letter code: Putative 8-amino-7-oxononanoate synthase (389 aa).

Arginine 22 lines the substrate pocket. 109–110 (GY) provides a ligand contact to pyridoxal 5'-phosphate. Histidine 134 lines the substrate pocket. Residues serine 182, 207-210 (DDAH), and 238-241 (TLSK) contribute to the pyridoxal 5'-phosphate site. Lysine 241 is modified (N6-(pyridoxal phosphate)lysine). Substrate is bound at residue threonine 350.

The protein belongs to the class-II pyridoxal-phosphate-dependent aminotransferase family. BioF subfamily. Homodimer. Requires pyridoxal 5'-phosphate as cofactor.

It carries out the reaction 6-carboxyhexanoyl-[ACP] + L-alanine + H(+) = (8S)-8-amino-7-oxononanoate + holo-[ACP] + CO2. It participates in cofactor biosynthesis; biotin biosynthesis. Its function is as follows. Catalyzes the decarboxylative condensation of pimeloyl-[acyl-carrier protein] and L-alanine to produce 8-amino-7-oxononanoate (AON), [acyl-carrier protein], and carbon dioxide. The protein is Putative 8-amino-7-oxononanoate synthase (bioF) of Parvibaculum lavamentivorans (strain DS-1 / DSM 13023 / NCIMB 13966).